Here is a 355-residue protein sequence, read N- to C-terminus: GTPase Obg (355 aa).

The region spanning 1–159 (MKLVDEAEIL…RLLKLELKLL (159 aa)) is the Obg domain. The 183-residue stretch at 160-342 (ADVGLLGFPN…IMKDVMAFFD (183 aa)) folds into the OBG-type G domain. Residues 166–173 (GFPNAGKS), 191–195 (FTTLY), 213–216 (DVPG), 292–295 (NKAD), and 323–325 (SAL) each bind GTP. Serine 173 and threonine 193 together coordinate Mg(2+).

It belongs to the TRAFAC class OBG-HflX-like GTPase superfamily. OBG GTPase family. Monomer. Mg(2+) serves as cofactor.

The protein localises to the cytoplasm. Its function is as follows. An essential GTPase which binds GTP, GDP and possibly (p)ppGpp with moderate affinity, with high nucleotide exchange rates and a fairly low GTP hydrolysis rate. Plays a role in control of the cell cycle, stress response, ribosome biogenesis and in those bacteria that undergo differentiation, in morphogenesis control. This Xanthomonas axonopodis pv. citri (strain 306) protein is GTPase Obg.